Here is an 88-residue protein sequence, read N- to C-terminus: Small ribosomal subunit protein bS18 (88 aa).

The disordered stretch occupies residues 1–22 (MSTKNAKPKKEAQRRPSRKAKV).

This sequence belongs to the bacterial ribosomal protein bS18 family. Part of the 30S ribosomal subunit. Forms a tight heterodimer with protein bS6.

Binds as a heterodimer with protein bS6 to the central domain of the 16S rRNA, where it helps stabilize the platform of the 30S subunit. The chain is Small ribosomal subunit protein bS18 (rpsR) from Thermus thermophilus.